Consider the following 239-residue polypeptide: Geranylgeranylglyceryl phosphate synthase (239 aa).

The Mg(2+) site is built by aspartate 18 and serine 45. Residues 166-172, 197-198, and 219-220 contribute to the sn-glycerol 1-phosphate site; these read YLEAGSG, GG, and GT.

The protein belongs to the GGGP/HepGP synthase family. Group II subfamily. Mg(2+) is required as a cofactor.

The protein resides in the cytoplasm. The enzyme catalyses sn-glycerol 1-phosphate + (2E,6E,10E)-geranylgeranyl diphosphate = sn-3-O-(geranylgeranyl)glycerol 1-phosphate + diphosphate. It functions in the pathway membrane lipid metabolism; glycerophospholipid metabolism. Prenyltransferase that catalyzes the transfer of the geranylgeranyl moiety of geranylgeranyl diphosphate (GGPP) to the C3 hydroxyl of sn-glycerol-1-phosphate (G1P). This reaction is the first ether-bond-formation step in the biosynthesis of archaeal membrane lipids. The chain is Geranylgeranylglyceryl phosphate synthase from Pyrobaculum islandicum (strain DSM 4184 / JCM 9189 / GEO3).